The primary structure comprises 336 residues: GTPase Obg (336 aa).

The Obg domain maps to 1 to 159 (MKFLDETKVY…KTIWLRLKLI (159 aa)). In terms of domain architecture, OBG-type G spans 160-327 (ADAGLVGLPN…TLRALRSVID (168 aa)). Residues 166–173 (GLPNAGKS), 191–195 (FTTLH), 212–215 (DIPG), 279–282 (SQID), and 308–310 (SAV) contribute to the GTP site. Ser173 and Thr193 together coordinate Mg(2+).

The protein belongs to the TRAFAC class OBG-HflX-like GTPase superfamily. OBG GTPase family. In terms of assembly, monomer. Mg(2+) serves as cofactor.

The protein resides in the cytoplasm. Functionally, an essential GTPase which binds GTP, GDP and possibly (p)ppGpp with moderate affinity, with high nucleotide exchange rates and a fairly low GTP hydrolysis rate. Plays a role in control of the cell cycle, stress response, ribosome biogenesis and in those bacteria that undergo differentiation, in morphogenesis control. The chain is GTPase Obg from Sinorhizobium medicae (strain WSM419) (Ensifer medicae).